The primary structure comprises 317 residues: MSSTRKFKKVEKPLSQTRHYSLCIPTTLVSDCRNLSQITHKVYQVAKFASLFNVSEVVILEDNSQVDATKKKISTAKLILALLQYFVTPPYLRNTVFNEKFRPYLTAASKLPRLSTLPFTRYQKQDHGRYREGLTIKMQKPTLARKKIGKVFKQTKYINIGKSKALALQSQLVPINARVTIDTITRKIVSPQEAYGDFTGLDSQYGYYTRIASSFTDLFMKGPLKEGYTQSVYVPLTTRDTSIPELSSLPTAETNPHILLVFSTWDTLARAFKLDQDQFVDCQGPQEFFDAQLPCPVSNSDVADAIPMTLTTLSTVF.

Ser-190 carries the post-translational modification Phosphoserine.

The protein belongs to the class IV-like SAM-binding methyltransferase superfamily.

The protein resides in the nucleus. The sequence is that of Putative methyltransferase YMR310C from Saccharomyces cerevisiae (strain ATCC 204508 / S288c) (Baker's yeast).